The following is an 843-amino-acid chain: Envelope glycoprotein gp160 (843 aa).

An N-terminal signal peptide occupies residues 1 to 33 (MRVREMQRNWQHLGKWGLLFLGILIICNANATD). An N-linked (GlcNAc...) asparagine; by host glycan is attached at asparagine 30. Residues 34–671 (DLWVTVYYGV…ITNWLWYIKI (638 aa)) lie on the Extracellular side of the membrane. The cysteines at positions 55 and 75 are disulfide-linked. Asparagine 89, asparagine 131, asparagine 136, asparagine 143, asparagine 156, asparagine 160, asparagine 186, asparagine 197, asparagine 234, asparagine 262, asparagine 276, asparagine 289, asparagine 301, asparagine 333, asparagine 338, asparagine 343, asparagine 353, and asparagine 359 each carry an N-linked (GlcNAc...) asparagine; by host glycan. 5 cysteine pairs are disulfide-bonded: cysteine 120–cysteine 205, cysteine 127–cysteine 196, cysteine 132–cysteine 157, cysteine 218–cysteine 247, and cysteine 228–cysteine 239. The interval 132-156 (CTDVNITMSDINGTSLKEDQGEIKN) is V1. The tract at residues 157–196 (CSFNVTTELKDKKRKQQALFYRLDVEPIKNSSNIYKLISC) is V2. The segment at 296 to 329 (CRRPNNNTRKGIRIGPGQTFFATGEIIGDIRKAY) is V3. The cysteines at positions 296 and 330 are disulfide-linked. Residues 361–371 (SSGGDVEITTH) form a CD4-binding loop region. Residues cysteine 375 and cysteine 432 are joined by a disulfide bond. The tract at residues 382–405 (YNTSGLFNETEVANNTNENITLPC) is V4. N-linked (GlcNAc...) asparagine; by host glycans are attached at residues asparagine 383, asparagine 389, asparagine 395, asparagine 400, and asparagine 435. 2 V5 regions span residues 448–458 (DIDGKEILRPI) and 450–458 (DGKEILRPI). Residues 499–519 (AVGMGAVLFGFLGAAGSTMGA) form a fusion peptide region. Positions 561 to 579 (KQLQARILAVERYLKDQQL) are immunosuppression. The cysteines at positions 585 and 591 are disulfide-linked. Residues asparagine 598, asparagine 603, asparagine 612, and asparagine 624 are each glycosylated (N-linked (GlcNAc...) asparagine; by host). The stretch at 620–654 (KEIDNYTKTIYSLIEDAQNQQERNEQELLALDKWD) forms a coiled coil. Residues 649–670 (ALDKWDSLWSWFSITNWLWYIK) form an MPER; binding to GalCer region. Residues 672 to 692 (FIMIVGGLIGLRIVFAVLSVV) form a helical membrane-spanning segment. Residues 693 to 843 (NRVRQGYSPL…IRQGAERFLL (151 aa)) lie on the Cytoplasmic side of the membrane. The short motif at 699 to 702 (YSPL) is the YXXL motif; contains endocytosis signal element. Residues 709–731 (PNPRGPDRPGGIEEEGGEPDRDR) form a disordered region. Residue cysteine 751 is the site of S-palmitoyl cysteine; by host attachment. The Di-leucine internalization motif signature appears at 842 to 843 (LL).

Belongs to the HIV-1 env protein family. The mature envelope protein (Env) consists of a homotrimer of non-covalently associated gp120-gp41 heterodimers. The resulting complex protrudes from the virus surface as a spike. There seems to be as few as 10 spikes on the average virion. Interacts with host CD4, CCR5 and CXCR4. Gp120 also interacts with the C-type lectins CD209/DC-SIGN and CLEC4M/DC-SIGNR (collectively referred to as DC-SIGN(R)). Gp120 and gp41 interact with GalCer. Gp120 interacts with host ITGA4/ITGB7 complex; on CD4+ T-cells, this interaction results in rapid activation of integrin ITGAL/LFA-1, which facilitates efficient cell-to-cell spreading of HIV-1. Gp120 interacts with cell-associated heparan sulfate; this interaction increases virus infectivity on permissive cells and may be involved in infection of CD4- cells. As to quaternary structure, the mature envelope protein (Env) consists of a homotrimer of non-covalently associated gp120-gp41 heterodimers. The resulting complex protrudes from the virus surface as a spike. There seems to be as few as 10 spikes on the average virion. Highly glycosylated by host. The high number of glycan on the protein is reffered to as 'glycan shield' because it contributes to hide protein sequence from adaptive immune system. Post-translationally, palmitoylation of the transmembrane protein and of Env polyprotein (prior to its proteolytic cleavage) is essential for their association with host cell membrane lipid rafts. Palmitoylation is therefore required for envelope trafficking to classical lipid rafts, but not for viral replication. In terms of processing, specific enzymatic cleavages in vivo yield mature proteins. Envelope glycoproteins are synthesized as an inactive precursor that is heavily N-glycosylated and processed likely by host cell furin in the Golgi to yield the mature SU and TM proteins. The cleavage site between SU and TM requires the minimal sequence [KR]-X-[KR]-R. About 2 of the 9 disulfide bonds of gp41 are reduced by P4HB/PDI, following binding to CD4 receptor.

Its subcellular location is the virion membrane. It is found in the host cell membrane. The protein resides in the host endosome membrane. Oligomerizes in the host endoplasmic reticulum into predominantly trimers. In a second time, gp160 transits in the host Golgi, where glycosylation is completed. The precursor is then proteolytically cleaved in the trans-Golgi and thereby activated by cellular furin or furin-like proteases to produce gp120 and gp41. Functionally, attaches the virus to the host lymphoid cell by binding to the primary receptor CD4. This interaction induces a structural rearrangement creating a high affinity binding site for a chemokine coreceptor like CXCR4 and/or CCR5. Acts as a ligand for CD209/DC-SIGN and CLEC4M/DC-SIGNR, which are respectively found on dendritic cells (DCs), and on endothelial cells of liver sinusoids and lymph node sinuses. These interactions allow capture of viral particles at mucosal surfaces by these cells and subsequent transmission to permissive cells. HIV subverts the migration properties of dendritic cells to gain access to CD4+ T-cells in lymph nodes. Virus transmission to permissive T-cells occurs either in trans (without DCs infection, through viral capture and transmission), or in cis (following DCs productive infection, through the usual CD4-gp120 interaction), thereby inducing a robust infection. In trans infection, bound virions remain infectious over days and it is proposed that they are not degraded, but protected in non-lysosomal acidic organelles within the DCs close to the cell membrane thus contributing to the viral infectious potential during DCs' migration from the periphery to the lymphoid tissues. On arrival at lymphoid tissues, intact virions recycle back to DCs' cell surface allowing virus transmission to CD4+ T-cells. Its function is as follows. Acts as a class I viral fusion protein. Under the current model, the protein has at least 3 conformational states: pre-fusion native state, pre-hairpin intermediate state, and post-fusion hairpin state. During fusion of viral and target intracellular membranes, the coiled coil regions (heptad repeats) assume a trimer-of-hairpins structure, positioning the fusion peptide in close proximity to the C-terminal region of the ectodomain. The formation of this structure appears to drive apposition and subsequent fusion of viral and target cell membranes. Complete fusion occurs in host cell endosomes and is dynamin-dependent, however some lipid transfer might occur at the plasma membrane. The virus undergoes clathrin-dependent internalization long before endosomal fusion, thus minimizing the surface exposure of conserved viral epitopes during fusion and reducing the efficacy of inhibitors targeting these epitopes. Membranes fusion leads to delivery of the nucleocapsid into the cytoplasm. The sequence is that of Envelope glycoprotein gp160 from Homo sapiens (Human).